The chain runs to 352 residues: Histidinol-phosphate aminotransferase (352 aa).

Residue Lys216 is modified to N6-(pyridoxal phosphate)lysine.

It belongs to the class-II pyridoxal-phosphate-dependent aminotransferase family. Histidinol-phosphate aminotransferase subfamily. It depends on pyridoxal 5'-phosphate as a cofactor.

It carries out the reaction L-histidinol phosphate + 2-oxoglutarate = 3-(imidazol-4-yl)-2-oxopropyl phosphate + L-glutamate. It functions in the pathway amino-acid biosynthesis; L-histidine biosynthesis; L-histidine from 5-phospho-alpha-D-ribose 1-diphosphate: step 7/9. The chain is Histidinol-phosphate aminotransferase from Methanoculleus marisnigri (strain ATCC 35101 / DSM 1498 / JR1).